The sequence spans 500 residues: Coiled-coil domain-containing protein 125 (500 aa).

Residues 1–105 form a disordered region; it reads MSKVPRSSSE…TDSNSELSDE (105 aa). Acidic residues predominate over residues 10–23; the sequence is EAEDIWETEDDMTE. The span at 92–101 shows a compositional bias: polar residues; sequence RLSSTDSNSE. Coiled coils occupy residues 101 to 237 and 286 to 314; these read ELSD…LEAL and STRK…TADA. S492 carries the phosphoserine modification.

As to expression, expressed in many tissues, with highest levels in spleen, thymus and bone marrow.

It localises to the cytoplasm. Functionally, may be involved in the regulation of cell migration. The sequence is that of Coiled-coil domain-containing protein 125 (Ccdc125) from Mus musculus (Mouse).